The following is a 389-amino-acid chain: Phosphopentomutase (389 aa).

Residues Asp-10, Asp-282, His-287, Asp-323, His-324, and His-335 each coordinate Mn(2+).

This sequence belongs to the phosphopentomutase family. It depends on Mn(2+) as a cofactor.

It is found in the cytoplasm. The catalysed reaction is 2-deoxy-alpha-D-ribose 1-phosphate = 2-deoxy-D-ribose 5-phosphate. It catalyses the reaction alpha-D-ribose 1-phosphate = D-ribose 5-phosphate. It participates in carbohydrate degradation; 2-deoxy-D-ribose 1-phosphate degradation; D-glyceraldehyde 3-phosphate and acetaldehyde from 2-deoxy-alpha-D-ribose 1-phosphate: step 1/2. Its function is as follows. Isomerase that catalyzes the conversion of deoxy-ribose 1-phosphate (dRib-1-P) and ribose 1-phosphate (Rib-1-P) to deoxy-ribose 5-phosphate (dRib-5-P) and ribose 5-phosphate (Rib-5-P), respectively. In Clostridium kluyveri (strain NBRC 12016), this protein is Phosphopentomutase.